The primary structure comprises 712 residues: Anaerobic ribonucleoside-triphosphate reductase (712 aa).

Residues 3 to 92 (PHVMKRDGCK…EYRHDRDIER (90 aa)) form the ATP-cone domain. Residues 583–708 (KKVNPYDKID…VKRRVKHLGN (126 aa)) enclose the Glycine radical domain. Positions 644, 647, 662, and 665 each coordinate Zn(2+). G681 carries the glycine radical modification.

It belongs to the anaerobic ribonucleoside-triphosphate reductase family. In terms of assembly, homodimer. Forms a tetramer composed of two NrdD and two NrdG subunits.

It catalyses the reaction a ribonucleoside 5'-triphosphate + formate + H(+) = a 2'-deoxyribonucleoside 5'-triphosphate + CO2 + H2O. The catalysed reaction is formate + ATP + H(+) = dATP + CO2 + H2O. The enzyme catalyses CTP + formate + H(+) = dCTP + CO2 + H2O. It carries out the reaction GTP + formate + H(+) = dGTP + CO2 + H2O. It catalyses the reaction UTP + formate + H(+) = dUTP + CO2 + H2O. With respect to regulation, activated under anaerobic conditions by NrdG, a tightly associated activase. Activation involves the formation of a glycyl radical at Gly-681. Exposure of the activated reductase to oxygen leads to C-terminal truncation and inactivation of the protein, by cleavage at the N-terminal side of Gly-681. The presence of zinc protects the protein from proteolysis and prevents the formation of disulfide bridges within it. The enzyme shows a basal activity in the absence of any effector, but reduction is stimulated up to 10-fold by an appropriate modulator (dGTP for ATP reduction, ATP for CTP and UTP reduction, and dTTP for GTP reduction). dGTP and dTTP inhibit the reduction of the incorrect substrate, and dATP inhibits reduction of all four. These modulators act as allosteric effectors. In terms of biological role, catalyzes the conversion of ribonucleotides into deoxyribonucleotides, which are required for DNA synthesis and repair. Can reduce each of the four common ribonucleoside triphosphates. This Escherichia coli (strain K12) protein is Anaerobic ribonucleoside-triphosphate reductase.